The following is a 461-amino-acid chain: Putative ankyrin repeat protein FPV218 (461 aa).

ANK repeat units lie at residues 1–28 (MLSL…HPDS), 31–61 (KGFY…NPNN), 65–94 (ETVS…DTSL), 96–116 (PLYV…DVNV), 120–149 (ESRS…NVNV), 153–182 (KGLS…RVNI), 186–213 (LGRL…PIDI), 217–248 (NGST…ALDN), 250–277 (CNSP…DITI), 281–312 (CGNT…LMRE), 358–385 (NGPT…NVQY), and 431–460 (LPYE…LKNK).

The protein is Putative ankyrin repeat protein FPV218 of Fowlpox virus (strain NVSL) (FPV).